The following is a 297-amino-acid chain: N-acetylmuramic acid 6-phosphate etherase (297 aa).

Residues 55–218 form the SIS domain; the sequence is AVAALKSGGR…STGAMVKFGK (164 aa). Residue E83 is the Proton donor of the active site. E114 is an active-site residue.

The protein belongs to the GCKR-like family. MurNAc-6-P etherase subfamily. As to quaternary structure, homodimer.

The catalysed reaction is N-acetyl-D-muramate 6-phosphate + H2O = N-acetyl-D-glucosamine 6-phosphate + (R)-lactate. It functions in the pathway amino-sugar metabolism; 1,6-anhydro-N-acetylmuramate degradation. Its pathway is amino-sugar metabolism; N-acetylmuramate degradation. The protein operates within cell wall biogenesis; peptidoglycan recycling. In terms of biological role, specifically catalyzes the cleavage of the D-lactyl ether substituent of MurNAc 6-phosphate, producing GlcNAc 6-phosphate and D-lactate. Together with AnmK, is also required for the utilization of anhydro-N-acetylmuramic acid (anhMurNAc) either imported from the medium or derived from its own cell wall murein, and thus plays a role in cell wall recycling. This chain is N-acetylmuramic acid 6-phosphate etherase, found in Salmonella dublin (strain CT_02021853).